Consider the following 259-residue polypeptide: Hydroxyacylglutathione hydrolase (259 aa).

The Zn(2+) site is built by H56, H58, D60, H61, H112, D133, and H171.

It belongs to the metallo-beta-lactamase superfamily. Glyoxalase II family. As to quaternary structure, monomer. Requires Zn(2+) as cofactor.

The enzyme catalyses an S-(2-hydroxyacyl)glutathione + H2O = a 2-hydroxy carboxylate + glutathione + H(+). Its pathway is secondary metabolite metabolism; methylglyoxal degradation; (R)-lactate from methylglyoxal: step 2/2. Functionally, thiolesterase that catalyzes the hydrolysis of S-D-lactoyl-glutathione to form glutathione and D-lactic acid. The chain is Hydroxyacylglutathione hydrolase from Pseudomonas entomophila (strain L48).